Consider the following 431-residue polypeptide: Tol-Pal system protein TolB (431 aa).

Positions 1 to 26 (MSLMTKLGFRALVASCLIAAGSAANA) are cleaved as a signal peptide. A disordered region spans residues 411-431 (PQILSVQGGSVREPSWGPFMQ).

Belongs to the TolB family. In terms of assembly, the Tol-Pal system is composed of five core proteins: the inner membrane proteins TolA, TolQ and TolR, the periplasmic protein TolB and the outer membrane protein Pal. They form a network linking the inner and outer membranes and the peptidoglycan layer.

The protein localises to the periplasm. Its function is as follows. Part of the Tol-Pal system, which plays a role in outer membrane invagination during cell division and is important for maintaining outer membrane integrity. The polypeptide is Tol-Pal system protein TolB (Burkholderia multivorans (strain ATCC 17616 / 249)).